Here is a 337-residue protein sequence, read N- to C-terminus: MQKSLITKWLCINCIMVIATIVIGGITRLTGSGLSIVEWRPVTGILPPFSFESWQSEFAKYKAFPEYNSVNYGITLSQFKFIYLLEFIHRLLGRITALIYIVPVIYFYFKDVIKNRDMLPYIIALLLFCVQGFIGWYMVKSGLLNSPYVSHFRLAFHLIIAVIIYHILFYQLIKNRCDILLIPSQTDFKLPLIFSGIAITVVYVQIFLGALVAGLDAGLIYNSFPLMDDRFIPMEIKDNFFDLKNWYDPVFIQFIHRLVGYSVFLVVVVLIICLLKIEHPKLNKIAYFLMIALFMQVSTGIITLLYSVPIIIASIHQLFAIILLSVIIWCYFLIKSF.

The next 5 helical transmembrane spans lie at 6–26 (ITKW…IGGI), 87–107 (FIHR…VIYF), 119–139 (LPYI…WYMV), 154–174 (LAFH…QLIK), and 192–212 (LIFS…GALV). Residue histidine 256 participates in heme binding. 3 consecutive transmembrane segments (helical) span residues 258-278 (LVGY…LKIE), 285-305 (IAYF…ITLL), and 308-328 (VPII…SVII). Heme is bound at residue histidine 316.

The protein belongs to the COX15/CtaA family. Type 2 subfamily. Interacts with CtaB. Requires heme b as cofactor.

The protein localises to the cell membrane. It catalyses the reaction Fe(II)-heme o + 2 A + H2O = Fe(II)-heme a + 2 AH2. It participates in porphyrin-containing compound metabolism; heme A biosynthesis; heme A from heme O: step 1/1. Functionally, catalyzes the conversion of heme O to heme A by two successive hydroxylations of the methyl group at C8. The first hydroxylation forms heme I, the second hydroxylation results in an unstable dihydroxymethyl group, which spontaneously dehydrates, resulting in the formyl group of heme A. This Rickettsia rickettsii (strain Iowa) protein is Heme A synthase.